Here is a 353-residue protein sequence, read N- to C-terminus: Zinc transporter 5 (353 aa).

The signal sequence occupies residues 1–27 (MATAAMTKVFVLLFLVAACYLPAHAAA). Residues 28–48 (AECDCATDTAGRDKAQALRLK) lie on the Extracellular side of the membrane. Residues 49 to 69 (VIAIFCILAGSTVGAALPSLG) form a helical membrane-spanning segment. The Cytoplasmic portion of the chain corresponds to 70 to 86 (GRFPAIQPETDVFLSVK). A helical membrane pass occupies residues 87–107 (AFAGGVILATGLVHILPAAFE). The Extracellular segment spans residues 108 to 121 (ALSSPCLVGGPWKR). The helical transmembrane segment at 122 to 142 (FPFAGMVAMVSAIGTLIVDTV) threads the bilayer. Topologically, residues 143-198 (ATGYFHRTDAKRKAAAVADEPADDLEASDEHSHGHAHGMSVMSVAPAGEEDLVRHR) are cytoplasmic. The helical transmembrane segment at 199–219 (VISQVLELGVVVHSLIIGMSL) threads the bilayer. Topologically, residues 220-230 (GASDFPSTVRP) are extracellular. A helical transmembrane segment spans residues 231–251 (LVPALTFHQFFEGIGLGGCIV). Topologically, residues 252 to 260 (QAKFRVRSV) are cytoplasmic. The helical transmembrane segment at 261-281 (VTMALFFSLTTPAGIVVGIGI) threads the bilayer. Residues 282-292 (SSVYDANSPTA) lie on the Extracellular side of the membrane. Residues 293–313 (LVVQGLLEAAAAGILVYMALV) traverse the membrane as a helical segment. The Cytoplasmic portion of the chain corresponds to 314-332 (DILAEDFMKTKVQRRGRLQ). The chain crosses the membrane as a helical span at residues 333-353 (LAMNVALLLGAGLMSMIAIWA).

The protein belongs to the ZIP transporter (TC 2.A.5) family.

Its subcellular location is the cell membrane. Zinc transporter that mediates zinc uptake from the rhizosphere and may be responsible for the translocation of zinc within the plant. The sequence is that of Zinc transporter 5 (ZIP5) from Oryza sativa subsp. japonica (Rice).